A 337-amino-acid chain; its full sequence is 4-hydroxy-3-methylbut-2-enyl diphosphate reductase (337 aa).

C25 is a [4Fe-4S] cluster binding site. (2E)-4-hydroxy-3-methylbut-2-enyl diphosphate contacts are provided by H54 and H87. 2 residues coordinate dimethylallyl diphosphate: H54 and H87. Isopentenyl diphosphate contacts are provided by H54 and H87. Residue C109 coordinates [4Fe-4S] cluster. Residue H137 participates in (2E)-4-hydroxy-3-methylbut-2-enyl diphosphate binding. Residue H137 participates in dimethylallyl diphosphate binding. Position 137 (H137) interacts with isopentenyl diphosphate. Catalysis depends on E139, which acts as the Proton donor. T177 lines the (2E)-4-hydroxy-3-methylbut-2-enyl diphosphate pocket. Position 207 (C207) interacts with [4Fe-4S] cluster. The (2E)-4-hydroxy-3-methylbut-2-enyl diphosphate site is built by S235, S236, N237, and S280. Dimethylallyl diphosphate-binding residues include S235, S236, N237, and S280. 4 residues coordinate isopentenyl diphosphate: S235, S236, N237, and S280.

This sequence belongs to the IspH family. Requires [4Fe-4S] cluster as cofactor.

The enzyme catalyses isopentenyl diphosphate + 2 oxidized [2Fe-2S]-[ferredoxin] + H2O = (2E)-4-hydroxy-3-methylbut-2-enyl diphosphate + 2 reduced [2Fe-2S]-[ferredoxin] + 2 H(+). It catalyses the reaction dimethylallyl diphosphate + 2 oxidized [2Fe-2S]-[ferredoxin] + H2O = (2E)-4-hydroxy-3-methylbut-2-enyl diphosphate + 2 reduced [2Fe-2S]-[ferredoxin] + 2 H(+). Its pathway is isoprenoid biosynthesis; dimethylallyl diphosphate biosynthesis; dimethylallyl diphosphate from (2E)-4-hydroxy-3-methylbutenyl diphosphate: step 1/1. The protein operates within isoprenoid biosynthesis; isopentenyl diphosphate biosynthesis via DXP pathway; isopentenyl diphosphate from 1-deoxy-D-xylulose 5-phosphate: step 6/6. Catalyzes the conversion of 1-hydroxy-2-methyl-2-(E)-butenyl 4-diphosphate (HMBPP) into a mixture of isopentenyl diphosphate (IPP) and dimethylallyl diphosphate (DMAPP). Acts in the terminal step of the DOXP/MEP pathway for isoprenoid precursor biosynthesis. The polypeptide is 4-hydroxy-3-methylbut-2-enyl diphosphate reductase (Leifsonia xyli subsp. xyli (strain CTCB07)).